A 119-amino-acid chain; its full sequence is Large ribosomal subunit protein bL20 (119 aa).

This sequence belongs to the bacterial ribosomal protein bL20 family.

Binds directly to 23S ribosomal RNA and is necessary for the in vitro assembly process of the 50S ribosomal subunit. It is not involved in the protein synthesizing functions of that subunit. The polypeptide is Large ribosomal subunit protein bL20 (Gloeobacter violaceus (strain ATCC 29082 / PCC 7421)).